The sequence spans 346 residues: uncharacterized protein (346 aa).

The N-terminal stretch at 1–28 is a signal peptide; sequence MFEWMKNKKAISPILALLIVLGVTIVVG.

This is an uncharacterized protein from Methanocaldococcus jannaschii (strain ATCC 43067 / DSM 2661 / JAL-1 / JCM 10045 / NBRC 100440) (Methanococcus jannaschii).